An 846-amino-acid chain; its full sequence is Translation initiation factor IF-2 (846 aa).

A disordered region spans residues 198–219; that stretch reads YKREEEEKKSKAKKAGGKGFKK. Positions 207–219 are enriched in basic residues; the sequence is SKAKKAGGKGFKK. In terms of domain architecture, tr-type G spans 345–512; that stretch reads SRAPVVTIMG…AVLLQSEVLE (168 aa). The segment at 354–361 is G1; that stretch reads GHVDHGKT. Position 354 to 361 (354 to 361) interacts with GTP; sequence GHVDHGKT. Positions 379 to 383 are G2; the sequence is GITQH. The interval 400-403 is G3; the sequence is DTPG. GTP contacts are provided by residues 400 to 404 and 454 to 457; these read DTPGH and NKID. The G4 stretch occupies residues 454–457; the sequence is NKID. Residues 490–492 are G5; it reads SAK.

Belongs to the TRAFAC class translation factor GTPase superfamily. Classic translation factor GTPase family. IF-2 subfamily.

The protein resides in the cytoplasm. One of the essential components for the initiation of protein synthesis. Protects formylmethionyl-tRNA from spontaneous hydrolysis and promotes its binding to the 30S ribosomal subunits. Also involved in the hydrolysis of GTP during the formation of the 70S ribosomal complex. This Francisella tularensis subsp. holarctica (strain OSU18) protein is Translation initiation factor IF-2.